The sequence spans 148 residues: Basic leucine zipper 4 (148 aa).

Positions 48 to 97 (DDKKRRRTISNRESAKRSRMKKKKRFEELTEEVNRLNIRNQELKNRLANV) constitute a bZIP domain. Residues 50–70 (KKRRRTISNRESAKRSRMKKK) form a disordered region. The tract at residues 50 to 72 (KKRRRTISNRESAKRSRMKKKKR) is basic motif. The interval 76 to 90 (LTEEVNRLNIRNQEL) is leucine-zipper.

The protein localises to the nucleus. Its function is as follows. Probable transcription factor involved in somatic embryogenesis. Acts as a positive regulator of BHLH109. In Arabidopsis thaliana (Mouse-ear cress), this protein is Basic leucine zipper 4.